Reading from the N-terminus, the 1141-residue chain is DNA-directed RNA polymerase subunit beta (1141 aa).

2 stretches are compositionally biased toward acidic residues: residues 1063-1074 (EIEIKEDDDDVS) and 1096-1141 (GGNE…GDEE). The segment at 1063-1141 (EIEIKEDDDD…VPDEAYGDEE (79 aa)) is disordered.

Belongs to the RNA polymerase beta chain family. As to quaternary structure, the RNAP catalytic core consists of 2 alpha, 1 beta, 1 beta' and 1 omega subunit. When a sigma factor is associated with the core the holoenzyme is formed, which can initiate transcription.

It catalyses the reaction RNA(n) + a ribonucleoside 5'-triphosphate = RNA(n+1) + diphosphate. DNA-dependent RNA polymerase catalyzes the transcription of DNA into RNA using the four ribonucleoside triphosphates as substrates. This is DNA-directed RNA polymerase subunit beta from Moorella thermoacetica (strain ATCC 39073 / JCM 9320).